Reading from the N-terminus, the 122-residue chain is Phospholipase A2 crotoxin basic subunit CBd (122 aa).

7 disulfides stabilise this stretch: C26–C115, C28–C44, C43–C95, C49–C122, C50–C88, C57–C81, and C75–C86. The Ca(2+) site is built by Y27, G29, and G31. The active site involves H47. A Ca(2+)-binding site is contributed by D48. D89 is a catalytic residue.

This sequence belongs to the phospholipase A2 family. Group II subfamily. D49 sub-subfamily. As to quaternary structure, heterodimer of one of the acidic (CA1, CA2, CA3 or CA4) and one of the basic (CBa1, CBa2, CBb, CBc or CBd) subunits; non-covalently linked. The acidic subunit is non-toxic, without enzymatic activity and comprises 3 peptides that are cross-linked by 5 disulfide bridges. The basic subunit is toxic, has phospholipase A2 activity and is composed of a single chain. Multiple variants of each subunit give different crotoxin complexes that can be subdivided into 2 classes: (1) those of high toxicity, low PLA2 activity (CBb, CBc and CBd linked with high affinity to any CA) and high stability (K(d)=4.5 nM) and (2) those of moderate toxicity, high PLA2 activity (CBa2 linked with low affinity to any CA) and low stability (K(d)=25 nM). Interacts with crotoxin inhibitor from Crotalus serum (CICS); the interaction leads to dissociation of the CA-CB heterodimer and to inhibition of PLA2 activity of the CB subunit. Interacts with human NBD1 domain of CFTR. Ca(2+) is required as a cofactor. Expressed by the venom gland.

The protein resides in the secreted. The enzyme catalyses a 1,2-diacyl-sn-glycero-3-phosphocholine + H2O = a 1-acyl-sn-glycero-3-phosphocholine + a fatty acid + H(+). Functionally, heterodimer CA-CB: Crotoxin is a potent presynaptic neurotoxin that possesses phospholipase A2 (PLA2) activity and exerts a lethal action by blocking neuromuscular transmission. It consists of a non-covalent association of a basic and weakly toxic PLA2 subunit (CBa2, CBb, CBc, or CBd), with a small acidic, non-enzymatic and non-toxic subunit (CA1, CA2, CA3 or CA4). The complex acts by binding to a specific 48-kDa protein (R48) receptor located on presynaptic membranes, forming a transient ternary complex CA-CB-R48, followed by dissociation of the CA-CB complex and release of the CA subunit. At equilibrium, only the CB subunits remain associated with the specific crotoxin receptor. In addition to neurotoxicity, crotoxin has been found to exert myotoxicity, nephrotoxicity, and cardiovascular toxicity. Moreover, anti-inflammatory, immunomodulatory, anti-tumor and analgesic effects of crotoxin have also been reported. In terms of biological role, monomer CBd: The basic subunit of crotoxin is a snake venom phospholipase A2 (PLA2) that exhibits weak neurotoxicity (10-fold less than the heterodimer) and very strong anticoagulant effects by binding to factor Xa (F10) and inhibiting the prothrombinase activity. In addition, it shows the same effects described for the heterodimer and binds the nucleotide-binding domain (NBD1) of CFTR chloride channels and increases the channel current. PLA2 catalyzes the calcium-dependent hydrolysis of the 2-acyl groups in 3-sn-phosphoglycerides. The chain is Phospholipase A2 crotoxin basic subunit CBd from Crotalus durissus terrificus (South American rattlesnake).